The primary structure comprises 302 residues: Polyadenylate-binding protein 2 (302 aa).

A compositionally biased stretch (low complexity) spans 1–12 (MAAAAAAAAAAG). The interval 1–111 (MAAAAAAAAA…EADPGDGAIE (111 aa)) is disordered. N-acetylalanine is present on Ala2. The interaction with SKIP stretch occupies residues 2–141 (AAAAAAAAAA…LKELQNEVEK (140 aa)). At Arg17 the chain carries Omega-N-methylarginine. A Phosphoserine modification is found at Ser19. Positions 30 to 47 (GAGGEAGEGDPGGAGDYG) are enriched in gly residues. The span at 51–68 (ESEELEPGELLPEPEPEE) shows a compositional bias: acidic residues. Residue Ser52 is modified to Phosphoserine. Over residues 73-83 (PRAPPGAPGPG) the composition is skewed to pro residues. Phosphoserine is present on Ser91. Residues 111–147 (EDPELEAIKARVREMEEEAEKLKELQNEVEKQMNMSP) adopt a coiled-coil conformation. Positions 115–143 (LEAIKARVREMEEEAEKLKELQNEVEKQM) are stimulates PAPOLA. Ser146 and Ser231 each carry phosphoserine. Positions 168 to 245 (RSIYVGNVDY…RQIKVIPKRT (78 aa)) constitute an RRM domain. Residues Arg234, Arg255, and Arg259 each carry the asymmetric dimethylarginine; alternate modification. Residues Arg234, Arg255, and Arg259 each carry the omega-N-methylarginine; alternate modification. Residues 255–302 (RGFPRSRYRARTTNYNSSRSRFYSGFNSRPRGRIYRGRARATSWYSPY) are strong poly(A) affinity and self-association. An asymmetric dimethylarginine mark is found at Arg261, Arg263, Arg265, Arg273, Arg275, Arg283, Arg285, Arg287, Arg290, Arg292, and Arg294. The segment at 282 to 302 (SRPRGRIYRGRARATSWYSPY) is interaction with PAPOLA.

As to quaternary structure, monomer and homooligomer. Identified in a IGF2BP1-dependent mRNP granule complex containing untranslated mRNAs. Binds RNA as a monomer and oligomerizes when bound to poly(A). Interacts with PAPOLA, but only in presence of oligo(A) RNA. Interacts with NUDT21/CPSF5 and transportin. Associates in a ternary complex with CPSF4 and NS/NS1 and interaction with NS/NS1, blocks nuclear export of host cell mRNAs. Associates in a single complex with SKIP and MYOD1 and interacts with SKIP in differentiated myocytes. May interact with SETX. Interacts (via RRM domain and C-terminal arginine-rich region) with ZFP36 (via hypophosphorylated form); this interaction occurs in the nucleus in a RNA-independent manner, decreases in presence of single-stranded poly(A) RNA-oligomer and in a p38-dependent-manner and may down-regulated RNA poly(A) polymerase activity. Component of the poly(A) tail exosome targeting (PAXT) complex composed of PABPN1, ZFC3H1 and MTREX. Interacts with ZFC3H1 in a RNase-insensitive manner. Interacts with FRG1. Interacts with ZC3H11A. Post-translationally, arginine dimethylation is asymmetric and involves PRMT1 and PRMT3. It does not influence the RNA binding properties. As to expression, ubiquitous.

The protein resides in the cytoplasm. It localises to the nucleus. The protein localises to the nucleus speckle. Functionally, involved in the 3'-end formation of mRNA precursors (pre-mRNA) by the addition of a poly(A) tail of 200-250 nt to the upstream cleavage product. Stimulates poly(A) polymerase (PAPOLA) conferring processivity on the poly(A) tail elongation reaction and also controls the poly(A) tail length. Increases the affinity of poly(A) polymerase for RNA. Is also present at various stages of mRNA metabolism including nucleocytoplasmic trafficking and nonsense-mediated decay (NMD) of mRNA. Cooperates with SKIP to synergistically activate E-box-mediated transcription through MYOD1 and may regulate the expression of muscle-specific genes. Binds to poly(A) and to poly(G) with high affinity. May protect the poly(A) tail from degradation. Subunit of the trimeric poly(A) tail exosome targeting (PAXT) complex, a complex that directs a subset of long and polyadenylated poly(A) RNAs for exosomal degradation. The RNA exosome is fundamental for the degradation of RNA in eukaryotic nuclei. Substrate targeting is facilitated by its cofactor MTREX, which links to RNA-binding protein adapters. The polypeptide is Polyadenylate-binding protein 2 (Pabpn1) (Mus musculus (Mouse)).